Reading from the N-terminus, the 194-residue chain is A-type ATP synthase subunit E (194 aa).

Residues 35–56 (DAEADADQIREEREAEVERTIE) form a disordered region. The segment covering 41-56 (DQIREEREAEVERTIE) has biased composition (basic and acidic residues).

It belongs to the V-ATPase E subunit family. As to quaternary structure, has multiple subunits with at least A(3), B(3), C, D, E, F, H, I and proteolipid K(x).

The protein resides in the cell membrane. Component of the A-type ATP synthase that produces ATP from ADP in the presence of a proton gradient across the membrane. The sequence is that of A-type ATP synthase subunit E from Haloarcula marismortui (strain ATCC 43049 / DSM 3752 / JCM 8966 / VKM B-1809) (Halobacterium marismortui).